We begin with the raw amino-acid sequence, 886 residues long: Pyruvate dehydrogenase E1 component (886 aa).

Homodimer. Part of the PDH complex, consisting of multiple copies of pyruvate dehydrogenase (E1), dihydrolipoamide acetyltransferase (E2) and lipoamide dehydrogenase (E3). Requires thiamine diphosphate as cofactor.

The catalysed reaction is N(6)-[(R)-lipoyl]-L-lysyl-[protein] + pyruvate + H(+) = N(6)-[(R)-S(8)-acetyldihydrolipoyl]-L-lysyl-[protein] + CO2. Its function is as follows. Component of the pyruvate dehydrogenase (PDH) complex, that catalyzes the overall conversion of pyruvate to acetyl-CoA and CO(2). The polypeptide is Pyruvate dehydrogenase E1 component (aceE) (Haemophilus influenzae (strain ATCC 51907 / DSM 11121 / KW20 / Rd)).